The chain runs to 331 residues: ADP,ATP carrier protein 2, mitochondrial (331 aa).

Solcar repeat units lie at residues 29 to 122 (KNFA…FKRM), 134 to 226 (KWFG…LKPV), and 238 to 320 (ASFA…LQIL). Helical transmembrane passes span 31-58 (FAIDFLMGGVSAAVSKTAAAPIERVKLL), 99-123 (TANVIRYFPTQALNFAFKDYFKRMF), 132-152 (YWKWFGGNLASGGAAGASSLF), 202-223 (FNISCVGIIVYRGLYFGLYDSL), and 237-257 (FASFALGWLITNGAGLASYPI). Residues arginine 104 and lysine 116 each contribute to the ADP site. Arginine 261 lines the ADP pocket. The interval 261–266 (RRRMMM) is important for transport activity. The Nucleotide carrier signature motif motif lies at 261 to 266 (RRRMMM). Residues 297 to 317 (AGANILRAIAGAGVLSGYDQL) form a helical membrane-spanning segment.

It belongs to the mitochondrial carrier (TC 2.A.29) family. In terms of assembly, monomer.

It is found in the mitochondrion inner membrane. It carries out the reaction ADP(in) + ATP(out) = ADP(out) + ATP(in). Its activity is regulated as follows. The matrix-open state (m-state) is inhibited by the membrane-permeable bongkrekic acid (BKA). The cytoplasmic-open state (c-state) is inhibited by the membrane-impermeable toxic inhibitor carboxyatractyloside (CATR). Its function is as follows. ADP:ATP antiporter that mediates import of ADP into the mitochondrial matrix for ATP synthesis, and export of ATP out to fuel the cell. Cycles between the cytoplasmic-open state (c-state) and the matrix-open state (m-state): operates by the alternating access mechanism with a single substrate-binding site intermittently exposed to either the cytosolic (c-state) or matrix (m-state) side of the inner mitochondrial membrane. The polypeptide is ADP,ATP carrier protein 2, mitochondrial (ANT-G2) (Triticum aestivum (Wheat)).